The sequence spans 179 residues: Large ribosomal subunit protein uL6 (179 aa).

Basic and acidic residues predominate over residues 154–169 (EPYKGKGVKYEHEQIR). A disordered region spans residues 154–179 (EPYKGKGVKYEHEQIRRKAGKSGGKK). The segment covering 170 to 179 (RKAGKSGGKK) has biased composition (basic residues).

The protein belongs to the universal ribosomal protein uL6 family. Part of the 50S ribosomal subunit.

In terms of biological role, this protein binds to the 23S rRNA, and is important in its secondary structure. It is located near the subunit interface in the base of the L7/L12 stalk, and near the tRNA binding site of the peptidyltransferase center. The polypeptide is Large ribosomal subunit protein uL6 (Oleidesulfovibrio alaskensis (strain ATCC BAA-1058 / DSM 17464 / G20) (Desulfovibrio alaskensis)).